The primary structure comprises 230 residues: Phosphoribosylaminoimidazole-succinocarboxamide synthase (230 aa).

This sequence belongs to the SAICAR synthetase family.

The catalysed reaction is 5-amino-1-(5-phospho-D-ribosyl)imidazole-4-carboxylate + L-aspartate + ATP = (2S)-2-[5-amino-1-(5-phospho-beta-D-ribosyl)imidazole-4-carboxamido]succinate + ADP + phosphate + 2 H(+). It participates in purine metabolism; IMP biosynthesis via de novo pathway; 5-amino-1-(5-phospho-D-ribosyl)imidazole-4-carboxamide from 5-amino-1-(5-phospho-D-ribosyl)imidazole-4-carboxylate: step 1/2. In Thermotoga petrophila (strain ATCC BAA-488 / DSM 13995 / JCM 10881 / RKU-1), this protein is Phosphoribosylaminoimidazole-succinocarboxamide synthase.